A 504-amino-acid polypeptide reads, in one-letter code: Maturase K (504 aa).

The protein belongs to the intron maturase 2 family. MatK subfamily.

The protein resides in the plastid. It localises to the chloroplast. In terms of biological role, usually encoded in the trnK tRNA gene intron. Probably assists in splicing its own and other chloroplast group II introns. This is Maturase K from Fagus crenata (Japanese beech).